The chain runs to 298 residues: Small ribosomal subunit protein uS3m (298 aa).

Belongs to the universal ribosomal protein uS3 family.

The protein localises to the mitochondrion. The chain is Small ribosomal subunit protein uS3m (RPS3) from Acanthamoeba castellanii (Amoeba).